The primary structure comprises 366 residues: tRNA-specific 2-thiouridylase MnmA (366 aa).

ATP contacts are provided by residues 10–17 (GLSGGVDS) and isoleucine 36. Residue cysteine 98 is the Nucleophile of the active site. Cysteine 98 and cysteine 194 are disulfide-bonded. An ATP-binding site is contributed by glycine 122. The tract at residues 144-146 (KDQ) is interaction with tRNA. Cysteine 194 serves as the catalytic Cysteine persulfide intermediate. The segment at 303–304 (RY) is interaction with tRNA.

This sequence belongs to the MnmA/TRMU family.

The protein localises to the cytoplasm. The enzyme catalyses S-sulfanyl-L-cysteinyl-[protein] + uridine(34) in tRNA + AH2 + ATP = 2-thiouridine(34) in tRNA + L-cysteinyl-[protein] + A + AMP + diphosphate + H(+). Its function is as follows. Catalyzes the 2-thiolation of uridine at the wobble position (U34) of tRNA, leading to the formation of s(2)U34. This is tRNA-specific 2-thiouridylase MnmA from Chlorobaculum tepidum (strain ATCC 49652 / DSM 12025 / NBRC 103806 / TLS) (Chlorobium tepidum).